Here is a 102-residue protein sequence, read N- to C-terminus: Scorpine-like-2 (102 aa).

Positions 1 to 19 (MQTQCTVLQLLVLVALCSC) are cleaved as a signal peptide. The BetaSPN-type CS-alpha/beta domain occupies 63-102 (QQLCLIVDTVQWCNKSCLAAENKEGYCHGTKCKCGIKVSY). 3 disulfides stabilise this stretch: C66-C89, C75-C94, and C79-C96.

The protein belongs to the long chain scorpion toxin family. Class 3 subfamily. In terms of tissue distribution, expressed by the venom gland.

The protein resides in the secreted. Functionally, inhibits voltage-gated potassium channels. The sequence is that of Scorpine-like-2 from Urodacus yaschenkoi (Inland robust scorpion).